The sequence spans 281 residues: Shikimate dehydrogenase (NADP(+)) (281 aa).

Residues 14–16 and threonine 61 each bind shikimate; that span reads SKS. Lysine 65 (proton acceptor) is an active-site residue. 2 residues coordinate shikimate: asparagine 86 and aspartate 105. NADP(+)-binding positions include 130–134, 154–159, and methionine 221; these read GAGGA and NRTAAK. Tyrosine 223 serves as a coordination point for shikimate. Glycine 245 provides a ligand contact to NADP(+).

The protein belongs to the shikimate dehydrogenase family. In terms of assembly, homodimer.

The catalysed reaction is shikimate + NADP(+) = 3-dehydroshikimate + NADPH + H(+). It functions in the pathway metabolic intermediate biosynthesis; chorismate biosynthesis; chorismate from D-erythrose 4-phosphate and phosphoenolpyruvate: step 4/7. Involved in the biosynthesis of the chorismate, which leads to the biosynthesis of aromatic amino acids. Catalyzes the reversible NADPH linked reduction of 3-dehydroshikimate (DHSA) to yield shikimate (SA). In Azoarcus sp. (strain BH72), this protein is Shikimate dehydrogenase (NADP(+)).